The sequence spans 444 residues: Probable glycine dehydrogenase (decarboxylating) subunit 1 (444 aa).

It belongs to the GcvP family. N-terminal subunit subfamily. The glycine cleavage system is composed of four proteins: P, T, L and H. In this organism, the P 'protein' is a heterodimer of two subunits.

The enzyme catalyses N(6)-[(R)-lipoyl]-L-lysyl-[glycine-cleavage complex H protein] + glycine + H(+) = N(6)-[(R)-S(8)-aminomethyldihydrolipoyl]-L-lysyl-[glycine-cleavage complex H protein] + CO2. Its function is as follows. The glycine cleavage system catalyzes the degradation of glycine. The P protein binds the alpha-amino group of glycine through its pyridoxal phosphate cofactor; CO(2) is released and the remaining methylamine moiety is then transferred to the lipoamide cofactor of the H protein. The chain is Probable glycine dehydrogenase (decarboxylating) subunit 1 from Chlorobium luteolum (strain DSM 273 / BCRC 81028 / 2530) (Pelodictyon luteolum).